The following is a 112-amino-acid chain: Conotoxin vil14.5 (112 aa).

The signal sequence occupies residues 1–22 (MGFRVLVLVVMATTSALPFTFS). Positions 23 to 85 (EEPGRSPFRP…FAELSVGQRR (63 aa)) are excised as a propeptide. The disordered stretch occupies residues 53 to 74 (RADGQPPDMRQPEMRRPEVRQP). Basic and acidic residues predominate over residues 62-74 (RQPEMRRPEVRQP). Cystine bridges form between Cys91–Cys111 and Cys95–Cys107.

This sequence belongs to the conotoxin R superfamily. Expressed by the venom duct.

It localises to the secreted. The chain is Conotoxin vil14.5 from Conus villepinii (Villepin's cone).